We begin with the raw amino-acid sequence, 620 residues long: Aspartic protease 1 (620 aa).

The Cytoplasmic portion of the chain corresponds to 1 to 110 (MSPSSRFRNL…LGKAVGLSTS (110 aa)). Positions 1 to 258 (MSPSSRFRNL…SKKDDGNLSG (258 aa)) are excised as a propeptide. Residues 27 to 31 (YASLL) are important for proper cellular trafficking. The chain crosses the membrane as a helical; Signal-anchor for type II membrane protein span at residues 111-131 (VICVVALFGIVCLCLYGLVNF). Residues 132 to 620 (SFTSVETSPL…KQIGFARLKN (489 aa)) are Lumenal-facing. Positions 138-174 (TSPLDDPRNSPVMGELGNPQASTPSSARADTPARHDR) are disordered. Positions 156-165 (PQASTPSSAR) are enriched in polar residues. Residues 275–616 (YYTEIYVGSP…DYDNKQIGFA (342 aa)) form the Peptidase A1 domain. Residues D293 and D476 contribute to the active site. An intrachain disulfide couples C513 to C550.

The protein belongs to the peptidase A1 family. Post-translationally, proteolytically cleaved into the soluble active mature form by, at least, cysteine protease CPL. Undergoes at least four processing steps; the first cleavage removes the propeptide resulting in the production of a soluble 45 kDa protein, which is further processed into a 35 kDa form followed by an additional processing into the final active 30 kDa form.

It is found in the membrane. The protein resides in the vacuole. In terms of biological role, aspartyl protease which is dispensable for protein degradation in the vacuolar compartment (VAC) or for tachyzoite and bradyzoite viability. In Toxoplasma gondii, this protein is Aspartic protease 1.